Reading from the N-terminus, the 370-residue chain is MKFIDEARIEVIAGDGGDGSASMRREKFVPFGGPDGGDGGRGGSVYAIADRNINTLIDYRYAKKHLARNGENGRGSDCYGKGGDDVTLRMPVGTIISDMDTGELIADLTEHDQRVMLAQGGAGGLGNLHFKSSTNRAPRQKTDGKPGERRMLKLELKVLADVGLLGMPNAGKSTFISSVSNAKPKIADYPFTTLAPNLGVVRVGPSKSFVIADIPGLIEGAAEGAGLGHQFLRHLQRTGVLLHLVDLAPFDESVDPVAEATAIVGELRKYDEALYEKPRWLVLNKLDMVPEDEREARVADFLDRFGWDGPVFEISALTGQGCEALCYAIYDYLSEHSDAHRAAEAEDLAADVRFRDAPPAKGGATPGDDA.

Positions 1–159 constitute an Obg domain; sequence MKFIDEARIE…RMLKLELKVL (159 aa). Positions 128–147 are disordered; it reads LHFKSSTNRAPRQKTDGKPG. Positions 160–334 constitute an OBG-type G domain; the sequence is ADVGLLGMPN…LCYAIYDYLS (175 aa). Residues 166-173, 191-195, 213-216, 284-287, and 315-317 contribute to the GTP site; these read GMPNAGKS, FTTLA, DIPG, NKLD, and SAL. Residues Ser173 and Thr193 each coordinate Mg(2+).

Belongs to the TRAFAC class OBG-HflX-like GTPase superfamily. OBG GTPase family. As to quaternary structure, monomer. Requires Mg(2+) as cofactor.

It is found in the cytoplasm. Functionally, an essential GTPase which binds GTP, GDP and possibly (p)ppGpp with moderate affinity, with high nucleotide exchange rates and a fairly low GTP hydrolysis rate. Plays a role in control of the cell cycle, stress response, ribosome biogenesis and in those bacteria that undergo differentiation, in morphogenesis control. The protein is GTPase Obg of Burkholderia cenocepacia (strain ATCC BAA-245 / DSM 16553 / LMG 16656 / NCTC 13227 / J2315 / CF5610) (Burkholderia cepacia (strain J2315)).